Here is a 200-residue protein sequence, read N- to C-terminus: Holliday junction branch migration complex subunit RuvA (200 aa).

The interval 1–63 (MYAYIKGTLS…EDAQLLYGFI (63 aa)) is domain I. The domain II stretch occupies residues 64–142 (NEEEKEMFLS…ITEENSDDLL (79 aa)). Positions 143–149 (QTQVNGN) are flexible linker. The segment at 150-200 (EQNQIISEALLALQALGYSKRELTKVEKSLNKHNVNSVDEAVKIGLQTLVS) is domain III.

The protein belongs to the RuvA family. In terms of assembly, homotetramer. Forms an RuvA(8)-RuvB(12)-Holliday junction (HJ) complex. HJ DNA is sandwiched between 2 RuvA tetramers; dsDNA enters through RuvA and exits via RuvB. An RuvB hexamer assembles on each DNA strand where it exits the tetramer. Each RuvB hexamer is contacted by two RuvA subunits (via domain III) on 2 adjacent RuvB subunits; this complex drives branch migration. In the full resolvosome a probable DNA-RuvA(4)-RuvB(12)-RuvC(2) complex forms which resolves the HJ.

The protein localises to the cytoplasm. The RuvA-RuvB-RuvC complex processes Holliday junction (HJ) DNA during genetic recombination and DNA repair, while the RuvA-RuvB complex plays an important role in the rescue of blocked DNA replication forks via replication fork reversal (RFR). RuvA specifically binds to HJ cruciform DNA, conferring on it an open structure. The RuvB hexamer acts as an ATP-dependent pump, pulling dsDNA into and through the RuvAB complex. HJ branch migration allows RuvC to scan DNA until it finds its consensus sequence, where it cleaves and resolves the cruciform DNA. This Staphylococcus epidermidis (strain ATCC 35984 / DSM 28319 / BCRC 17069 / CCUG 31568 / BM 3577 / RP62A) protein is Holliday junction branch migration complex subunit RuvA.